A 1053-amino-acid polypeptide reads, in one-letter code: Carbamoyl phosphate synthase large chain (1053 aa).

Residues 1–397 are carboxyphosphate synthetic domain; that stretch reads MPKNTSLKKV…GFKKALRSLD (397 aa). ATP is bound by residues R127, R167, G173, G174, E206, V208, E213, G239, V240, H241, Q282, and E294. The 193-residue stretch at 131–323 folds into the ATP-grasp 1 domain; it reads KKLMLEIGEP…IARVAAKVAI (193 aa). Residues Q282, E294, and N296 each contribute to the Mg(2+) site. The Mn(2+) site is built by Q282, E294, and N296. The interval 398-530 is oligomerization domain; it reads TDIYRHTDLN…YSTWEQECEL (133 aa). Positions 531 to 919 are carbamoyl phosphate synthetic domain; sequence TQSDRKKILI…YKASQAADNT (389 aa). Residues 661–852 form the ATP-grasp 2 domain; sequence SVLLDQNNIP…LAKIAAKLML (192 aa). ATP is bound by residues R697, R736, L738, E743, G768, V769, H770, S771, Q811, and E823. Q811, E823, and N825 together coordinate Mg(2+). Mn(2+) contacts are provided by Q811, E823, and N825. Positions 918-1053 constitute an MGS-like domain; it reads NTIPLKGNVF…TVEPLSHYHS (136 aa). Positions 920–1053 are allosteric domain; it reads IPLKGNVFIS…TVEPLSHYHS (134 aa).

This sequence belongs to the CarB family. As to quaternary structure, composed of two chains; the small (or glutamine) chain promotes the hydrolysis of glutamine to ammonia, which is used by the large (or ammonia) chain to synthesize carbamoyl phosphate. Tetramer of heterodimers (alpha,beta)4. It depends on Mg(2+) as a cofactor. Mn(2+) is required as a cofactor.

It catalyses the reaction hydrogencarbonate + L-glutamine + 2 ATP + H2O = carbamoyl phosphate + L-glutamate + 2 ADP + phosphate + 2 H(+). It carries out the reaction hydrogencarbonate + NH4(+) + 2 ATP = carbamoyl phosphate + 2 ADP + phosphate + 2 H(+). The protein operates within amino-acid biosynthesis; L-arginine biosynthesis; carbamoyl phosphate from bicarbonate: step 1/1. Its pathway is pyrimidine metabolism; UMP biosynthesis via de novo pathway; (S)-dihydroorotate from bicarbonate: step 1/3. Large subunit of the glutamine-dependent carbamoyl phosphate synthetase (CPSase). CPSase catalyzes the formation of carbamoyl phosphate from the ammonia moiety of glutamine, carbonate, and phosphate donated by ATP, constituting the first step of 2 biosynthetic pathways, one leading to arginine and/or urea and the other to pyrimidine nucleotides. The large subunit (synthetase) binds the substrates ammonia (free or transferred from glutamine from the small subunit), hydrogencarbonate and ATP and carries out an ATP-coupled ligase reaction, activating hydrogencarbonate by forming carboxy phosphate which reacts with ammonia to form carbamoyl phosphate. This Methanocorpusculum labreanum (strain ATCC 43576 / DSM 4855 / Z) protein is Carbamoyl phosphate synthase large chain.